Consider the following 1057-residue polypeptide: mRNA export factor elf1 (1057 aa).

ABC transporter domains follow at residues 440–659 (IEEE…VKPE) and 692–1019 (LKMT…KKKL). Residues 477-484 (GHNGCGKS) and 726-733 (GPNGAGKS) each bind ATP. Phosphoserine is present on Ser-733. Positions 820–869 (RRVEALIGRQKLKKSFQYEIKWFGKPHKYNTWVSREILLENGFQKFVQAF) constitute a Chromo domain. Basic and acidic residues predominate over residues 1020 to 1036 (TRNEIKAKERRAREREL). Positions 1020-1057 (TRNEIKAKERRARERELAWLQSPKGTEKPKSFFSDDEE) are disordered. Residues Ser-1041 and Ser-1053 each carry the phosphoserine modification.

This sequence belongs to the ABC transporter superfamily. ABCF family. EF3 subfamily.

It is found in the cytoplasm. It localises to the nucleus. Has a direct role in the mRNA export process. Appears to act within the rae1 mediated mRNA export pathway. This chain is mRNA export factor elf1 (elf1), found in Schizosaccharomyces pombe (strain 972 / ATCC 24843) (Fission yeast).